A 104-amino-acid chain; its full sequence is MDIHDYVELIALAFWVISVVSVGILSHVHFKNKRLEQFRITADDLMKNYVGLYNKESLASDQKINRIVNAVVDGLEAKGFKVEDQDVKDIFAKVAKIINENSSK.

An N-terminal signal peptide occupies residues 1 to 23; sequence MDIHDYVELIALAFWVISVVSVG.

This is an uncharacterized protein from Lactobacillus helveticus (Lactobacillus suntoryeus).